Here is a 287-residue protein sequence, read N- to C-terminus: Probable endonuclease 4 (287 aa).

Zn(2+)-binding residues include histidine 69, histidine 109, glutamate 144, aspartate 178, histidine 181, histidine 215, aspartate 228, histidine 230, and glutamate 260.

This sequence belongs to the AP endonuclease 2 family. It depends on Zn(2+) as a cofactor.

The catalysed reaction is Endonucleolytic cleavage to 5'-phosphooligonucleotide end-products.. Its function is as follows. Endonuclease IV plays a role in DNA repair. It cleaves phosphodiester bonds at apurinic or apyrimidinic (AP) sites, generating a 3'-hydroxyl group and a 5'-terminal sugar phosphate. The sequence is that of Probable endonuclease 4 from Thermotoga neapolitana (strain ATCC 49049 / DSM 4359 / NBRC 107923 / NS-E).